Here is a 340-residue protein sequence, read N- to C-terminus: Ketol-acid reductoisomerase (NADP(+)) (340 aa).

The KARI N-terminal Rossmann domain maps to 3-182; it reads VTMYYEEDVE…GCARVGIIET (180 aa). Residues 26 to 29, arginine 49, serine 53, and 83 to 86 each bind NADP(+); these read YGSQ and DELQ. The active site involves histidine 108. An NADP(+)-binding site is contributed by glycine 134. One can recognise a KARI C-terminal knotted domain in the interval 183-328; the sequence is TFKEETEEDL…AELRKAMPFT (146 aa). 4 residues coordinate Mg(2+): aspartate 191, glutamate 195, glutamate 227, and glutamate 231. Residue serine 252 participates in substrate binding.

It belongs to the ketol-acid reductoisomerase family. Mg(2+) is required as a cofactor.

It catalyses the reaction (2R)-2,3-dihydroxy-3-methylbutanoate + NADP(+) = (2S)-2-acetolactate + NADPH + H(+). It carries out the reaction (2R,3R)-2,3-dihydroxy-3-methylpentanoate + NADP(+) = (S)-2-ethyl-2-hydroxy-3-oxobutanoate + NADPH + H(+). It participates in amino-acid biosynthesis; L-isoleucine biosynthesis; L-isoleucine from 2-oxobutanoate: step 2/4. The protein operates within amino-acid biosynthesis; L-valine biosynthesis; L-valine from pyruvate: step 2/4. In terms of biological role, involved in the biosynthesis of branched-chain amino acids (BCAA). Catalyzes an alkyl-migration followed by a ketol-acid reduction of (S)-2-acetolactate (S2AL) to yield (R)-2,3-dihydroxy-isovalerate. In the isomerase reaction, S2AL is rearranged via a Mg-dependent methyl migration to produce 3-hydroxy-3-methyl-2-ketobutyrate (HMKB). In the reductase reaction, this 2-ketoacid undergoes a metal-dependent reduction by NADPH to yield (R)-2,3-dihydroxy-isovalerate. In Lactococcus lactis subsp. cremoris (strain SK11), this protein is Ketol-acid reductoisomerase (NADP(+)).